Consider the following 532-residue polypeptide: Phosphoenolpyruvate carboxykinase (ATP) (532 aa).

Substrate is bound by residues arginine 60, tyrosine 194, and lysine 200. ATP-binding positions include lysine 200, histidine 219, and glycine 237–threonine 245. The Mn(2+) site is built by lysine 200 and histidine 219. Mn(2+) is bound at residue aspartate 258. Positions 286, 324, and 449 each coordinate ATP. Arginine 324 serves as a coordination point for substrate.

It belongs to the phosphoenolpyruvate carboxykinase (ATP) family. Mn(2+) is required as a cofactor.

The protein localises to the cytoplasm. The enzyme catalyses oxaloacetate + ATP = phosphoenolpyruvate + ADP + CO2. The protein operates within carbohydrate biosynthesis; gluconeogenesis. Its function is as follows. Involved in the gluconeogenesis. Catalyzes the conversion of oxaloacetate (OAA) to phosphoenolpyruvate (PEP) through direct phosphoryl transfer between the nucleoside triphosphate and OAA. The chain is Phosphoenolpyruvate carboxykinase (ATP) from Roseobacter denitrificans (strain ATCC 33942 / OCh 114) (Erythrobacter sp. (strain OCh 114)).